Consider the following 266-residue polypeptide: 3-methyl-2-oxobutanoate hydroxymethyltransferase 2 (266 aa).

Residues aspartate 45 and aspartate 84 each contribute to the Mg(2+) site. 3-methyl-2-oxobutanoate contacts are provided by residues 45 to 46 (DS), aspartate 84, and lysine 112. Glutamate 114 provides a ligand contact to Mg(2+). The active-site Proton acceptor is glutamate 181.

It belongs to the PanB family. In terms of assembly, homodecamer; pentamer of dimers. Mg(2+) is required as a cofactor.

The protein resides in the cytoplasm. It catalyses the reaction 3-methyl-2-oxobutanoate + (6R)-5,10-methylene-5,6,7,8-tetrahydrofolate + H2O = 2-dehydropantoate + (6S)-5,6,7,8-tetrahydrofolate. Its pathway is cofactor biosynthesis; (R)-pantothenate biosynthesis; (R)-pantoate from 3-methyl-2-oxobutanoate: step 1/2. In terms of biological role, catalyzes the reversible reaction in which hydroxymethyl group from 5,10-methylenetetrahydrofolate is transferred onto alpha-ketoisovalerate to form ketopantoate. In Pseudomonas aeruginosa (strain ATCC 15692 / DSM 22644 / CIP 104116 / JCM 14847 / LMG 12228 / 1C / PRS 101 / PAO1), this protein is 3-methyl-2-oxobutanoate hydroxymethyltransferase 2.